The sequence spans 392 residues: Phosphoglycerate kinase (392 aa).

Substrate is bound by residues 21–23, R36, 59–62, R113, and R146; these read DLN and HLGR. ATP contacts are provided by residues K197, E319, and 345–348; that span reads GGDT.

This sequence belongs to the phosphoglycerate kinase family. In terms of assembly, monomer.

It localises to the cytoplasm. It catalyses the reaction (2R)-3-phosphoglycerate + ATP = (2R)-3-phospho-glyceroyl phosphate + ADP. It participates in carbohydrate degradation; glycolysis; pyruvate from D-glyceraldehyde 3-phosphate: step 2/5. The protein is Phosphoglycerate kinase of Thioalkalivibrio sulfidiphilus (strain HL-EbGR7).